The primary structure comprises 455 residues: Beta-1,4-mannosyltransferase bre-3 (455 aa).

The protein belongs to the glycosyltransferase 2 family. Endothelial cells.

It localises to the cytoplasm. Its pathway is protein modification; protein glycosylation. In terms of biological role, glycosyltransferase with a proposed role in glycosphingolipid biosynthesis. Involved in susceptibility to pore-forming crystal toxins in conjunction with bre-1, bre-2, bre-4 and bre-5. Involved in resistance to the nematotoxic C.cinerea galectin Cgl2. Has a role in determining brood size. The protein is Beta-1,4-mannosyltransferase bre-3 (bre-3) of Caenorhabditis elegans.